The primary structure comprises 133 residues: Cytochrome c' (133 aa).

5 residues coordinate heme c: Arg-12, Thr-72, Cys-122, Cys-125, and His-126.

Post-translationally, binds 1 heme c group covalently per subunit.

Cytochrome c' is the most widely occurring bacterial c-type cytochrome. Cytochromes c' are high-spin proteins and the heme has no sixth ligand. Their exact function is not known. The polypeptide is Cytochrome c' (Rhodocyclus tenuis (Rhodospirillum tenue)).